Here is a 101-residue protein sequence, read N- to C-terminus: Phosphoprotein OPG062 (101 aa).

Positions 51–73 (PSSPACERRPSSPSRCERMNNPR) are disordered. Ser53 and Ser62 each carry phosphoserine. The segment covering 56 to 70 (CERRPSSPSRCERMN) has biased composition (basic and acidic residues).

It belongs to the orthopoxvirus OPG062 family. In terms of assembly, self-associates to form high molecular-weight forms. Interacts with protein OPG157/A30. Interacts with host RICTOR and RPTOR; these interactions disrupt the mTORC1 and mTORC2 crosstalk. Phosphorylated on two serines. While these phosphorylations do not play a role in virion assembly; they are essential for the interaction with host RICTOR and RPTOR.

The protein resides in the virion. In terms of biological role, plays an essential role in virion assembly and morphogenesis. Also plays a role in the inhibition of host immune response by dysregulating mTOR. Sequesters host RICTOR and RPTOR, thereby disrupting mTORC1 and mTORC2 crosstalk. In turn, blocks the host antiviral response in part through mTOR-dependent degradation of cGAS, the primary poxvirus sensor. The protein is Phosphoprotein OPG062 (OPG062) of Vaccinia virus (strain Western Reserve) (VACV).